Consider the following 220-residue polypeptide: LOB domain-containing protein 31 (220 aa).

Residues 10-112 (GPCGACKFLR…AELAYVQTQL (103 aa)) enclose the LOB domain. The interval 117–172 (GLPPPNSQNNSRTEAASSSNVPLISSVDSKDNMSSSSSHIPCMSQQQEQEQPKEAI) is disordered. Residues 123–139 (SQNNSRTEAASSSNVPL) show a composition bias toward polar residues.

This sequence belongs to the LOB domain-containing protein family. In terms of tissue distribution, expressed in roots, stems and flowers.

The sequence is that of LOB domain-containing protein 31 (LBD31) from Arabidopsis thaliana (Mouse-ear cress).